Reading from the N-terminus, the 396-residue chain is Imidazolonepropionase (396 aa).

The Fe(3+) site is built by His-69 and His-71. Zn(2+) is bound by residues His-69 and His-71. Residues Arg-78, Tyr-136, and His-163 each contribute to the 4-imidazolone-5-propanoate site. Tyr-136 contributes to the N-formimidoyl-L-glutamate binding site. A Fe(3+)-binding site is contributed by His-224. His-224 serves as a coordination point for Zn(2+). Gln-227 serves as a coordination point for 4-imidazolone-5-propanoate. Fe(3+) is bound at residue Asp-298. Asp-298 provides a ligand contact to Zn(2+). The N-formimidoyl-L-glutamate site is built by Asn-300 and Gly-302. Residue Thr-303 participates in 4-imidazolone-5-propanoate binding.

It belongs to the metallo-dependent hydrolases superfamily. HutI family. It depends on Zn(2+) as a cofactor. The cofactor is Fe(3+).

It localises to the cytoplasm. It catalyses the reaction 4-imidazolone-5-propanoate + H2O = N-formimidoyl-L-glutamate. Its pathway is amino-acid degradation; L-histidine degradation into L-glutamate; N-formimidoyl-L-glutamate from L-histidine: step 3/3. Catalyzes the hydrolytic cleavage of the carbon-nitrogen bond in imidazolone-5-propanoate to yield N-formimidoyl-L-glutamate. It is the third step in the universal histidine degradation pathway. The protein is Imidazolonepropionase of Cutibacterium acnes (strain DSM 16379 / KPA171202) (Propionibacterium acnes).